The sequence spans 368 residues: RING finger protein 32 (368 aa).

The disordered stretch occupies residues 45-82 (RKKEKKSKSLKRDATAIIDTGLRKSTEGPNMEDPEKEY). The RING-type 1; atypical zinc-finger motif lies at 129 to 171 (CPICKEEFELHPQVLLSCSHVFHRACLQAFEKFTNKKTCPLCR). Residues 188–217 (RVKCATRIQAYWRGYIVRKWYRNLRKIIPP) enclose the IQ domain. Residues 295–358 (CSICLTPLSF…APFHVCPLCR (64 aa)) form an RING-type 2; atypical zinc finger.

The protein resides in the cytoplasm. Functionally, may play a role in sperm formation. The protein is RING finger protein 32 (Rnf32) of Mus musculus (Mouse).